The primary structure comprises 422 residues: Keratin, type II cytoskeletal 80 (422 aa).

The head stretch occupies residues 1 to 82; sequence MACRSCVVGF…DPAIQQQKNN (82 aa). S45 is modified (phosphoserine). A coil 1A region spans residues 83–118; sequence EKEEMKVLNDKFASLIGKVQALEQRNQLLETRWHFL. The 312-residue stretch at 83-394 folds into the IF rod domain; that stretch reads EKEEMKVLND…KLMEGEESRM (312 aa). The interval 119 to 135 is linker 1; it reads QSQDSATFDLGHLYEEY. The segment at 136-227 is coil 1B; it reads QGRLQEELRK…SIYEQELKDL (92 aa). A linker 12 region spans residues 228–251; that stretch reads AAQLKDVSVTVGMDSRCHIDLSGI. A coil 2 region spans residues 252–390; sequence VEEVKAQYDA…ATYRKLMEGE (139 aa). The tail stretch occupies residues 391 to 422; the sequence is ESRMDMPSATVVSAVQARCRTAPTLPHPLCSL.

It belongs to the intermediate filament family. As to quaternary structure, heterotetramer of two type I and two type II keratins.

This is Keratin, type II cytoskeletal 80 (KRT80) from Bos taurus (Bovine).